The primary structure comprises 370 residues: Phosphate acyltransferase (370 aa).

Residues 349–370 (SAGRAGQDAPDEMAAPGRSEKR) are disordered.

The protein belongs to the PlsX family. As to quaternary structure, homodimer. Probably interacts with PlsY.

It is found in the cytoplasm. It catalyses the reaction a fatty acyl-[ACP] + phosphate = an acyl phosphate + holo-[ACP]. Its pathway is lipid metabolism; phospholipid metabolism. Catalyzes the reversible formation of acyl-phosphate (acyl-PO(4)) from acyl-[acyl-carrier-protein] (acyl-ACP). This enzyme utilizes acyl-ACP as fatty acyl donor, but not acyl-CoA. The chain is Phosphate acyltransferase from Cereibacter sphaeroides (strain ATCC 17023 / DSM 158 / JCM 6121 / CCUG 31486 / LMG 2827 / NBRC 12203 / NCIMB 8253 / ATH 2.4.1.) (Rhodobacter sphaeroides).